The following is a 207-amino-acid chain: Cytochrome c biogenesis ATP-binding export protein CcmA (207 aa).

One can recognise an ABC transporter domain in the interval 2–204 (LEVKNLTAIR…NPKLRKIRLG (203 aa)). 34–41 (GRNGTGKT) contacts ATP.

It belongs to the ABC transporter superfamily. CcmA exporter (TC 3.A.1.107) family. In terms of assembly, the complex is composed of two ATP-binding proteins (CcmA) and two transmembrane proteins (CcmB).

The protein localises to the cell inner membrane. It carries out the reaction heme b(in) + ATP + H2O = heme b(out) + ADP + phosphate + H(+). Functionally, part of the ABC transporter complex CcmAB involved in the biogenesis of c-type cytochromes; once thought to export heme, this seems not to be the case, but its exact role is uncertain. Responsible for energy coupling to the transport system. This chain is Cytochrome c biogenesis ATP-binding export protein CcmA, found in Vibrio cholerae serotype O1 (strain ATCC 39315 / El Tor Inaba N16961).